The chain runs to 215 residues: ATP phosphoribosyltransferase (215 aa).

This sequence belongs to the ATP phosphoribosyltransferase family. Short subfamily. Heteromultimer composed of HisG and HisZ subunits.

Its subcellular location is the cytoplasm. The catalysed reaction is 1-(5-phospho-beta-D-ribosyl)-ATP + diphosphate = 5-phospho-alpha-D-ribose 1-diphosphate + ATP. It functions in the pathway amino-acid biosynthesis; L-histidine biosynthesis; L-histidine from 5-phospho-alpha-D-ribose 1-diphosphate: step 1/9. Catalyzes the condensation of ATP and 5-phosphoribose 1-diphosphate to form N'-(5'-phosphoribosyl)-ATP (PR-ATP). Has a crucial role in the pathway because the rate of histidine biosynthesis seems to be controlled primarily by regulation of HisG enzymatic activity. This is ATP phosphoribosyltransferase from Lachnoclostridium phytofermentans (strain ATCC 700394 / DSM 18823 / ISDg) (Clostridium phytofermentans).